Consider the following 436-residue polypeptide: Adenylosuccinate synthetase (436 aa).

GTP-binding positions include 13–19 (GDEGKGK) and 41–43 (GHT). D14 (proton acceptor) is an active-site residue. Mg(2+) is bound by residues D14 and G41. IMP contacts are provided by residues 14–17 (DEGK), 39–42 (NAGH), T130, R144, Q225, T240, and R304. H42 functions as the Proton donor in the catalytic mechanism. 300–306 (ATTGRSR) is a binding site for substrate. Residues R306, 332 to 334 (KLD), and 415 to 417 (STG) contribute to the GTP site.

This sequence belongs to the adenylosuccinate synthetase family. Homodimer. It depends on Mg(2+) as a cofactor.

The protein resides in the cytoplasm. The catalysed reaction is IMP + L-aspartate + GTP = N(6)-(1,2-dicarboxyethyl)-AMP + GDP + phosphate + 2 H(+). Its pathway is purine metabolism; AMP biosynthesis via de novo pathway; AMP from IMP: step 1/2. Functionally, plays an important role in the de novo pathway of purine nucleotide biosynthesis. Catalyzes the first committed step in the biosynthesis of AMP from IMP. In Hamiltonella defensa subsp. Acyrthosiphon pisum (strain 5AT), this protein is Adenylosuccinate synthetase.